We begin with the raw amino-acid sequence, 396 residues long: MQTKYDLSTMFIHSGRQKRFSQGSVNPVLQRASSLLFDSIEDKKHATQRRAKGELFYGRRGTLTHFALQDLMCEMEGGAGCYLYPCGTAAVTNSILSFVKTGDHVLMSGAAYEPTQYFCNIVLKKMQIDITYYDPLIGEDIATLIQPNTKVLFLEAPSSITMEIPDIPTIVKAARKVNPNIVIMIDNTWSAGVLFKALEHDIDISIQAGTKYLVGHSDIMIGTAVANARTWDQLREHSYLMGQMVDADSAYTTARGIRTLGVRLKQHQESSIKVAKWLSEQPEVKTVYHPALPSCPGHEFFLRDFSGSSGLFSFELTQRLTSEQVSKFMDHFQLFAMAYSWGGFESLILCNQPEEIAHIRPNIKRNLTGSLIRVHIGFENVDELIADLKAGFERIA.

Residue Lys211 is modified to N6-(pyridoxal phosphate)lysine.

Belongs to the trans-sulfuration enzymes family. As to quaternary structure, homotetramer. Pyridoxal 5'-phosphate serves as cofactor.

The protein localises to the cytoplasm. It carries out the reaction L,L-cystathionine + H2O = L-homocysteine + pyruvate + NH4(+). The enzyme catalyses an S-substituted L-cysteine + H2O = a thiol + pyruvate + NH4(+). It participates in amino-acid biosynthesis; L-methionine biosynthesis via de novo pathway; L-homocysteine from L-cystathionine: step 1/1. Catalyzes the cleavage of cystathionine to homocysteine, pyruvate and ammonia during methionine biosynthesis. This chain is Cystathionine beta-lyase (metC), found in Haemophilus influenzae (strain ATCC 51907 / DSM 11121 / KW20 / Rd).